Consider the following 736-residue polypeptide: DNA topoisomerase 1 (736 aa).

A Toprim domain is found at 2 to 113; that stretch reads KHLIIVESPA…SYPRIVFHEI (112 aa). Mg(2+) contacts are provided by Glu-8 and Asp-82. The Topo IA-type catalytic domain occupies 129–552; the sequence is DMSKVNAQQA…DFYYPFMDKI (424 aa). An interaction with DNA region spans residues 163–168; sequence SAGRVQ. Catalysis depends on Tyr-297, which acts as the O-(5'-phospho-DNA)-tyrosine intermediate. 4 C4-type zinc fingers span residues 572–598, 616–642, 663–689, and 702–725; these read CPKCGGELVKKNSRYGEFIACNNYPKC, CEKCGGEMVQKFSRNGAFLACNNYPEC, CPECGGDIALKRSKKGSFYGCNNYPKC, and CEKCHYLMSERIYRKKKAHECIKC.

It belongs to the type IA topoisomerase family. In terms of assembly, monomer. Mg(2+) is required as a cofactor.

It carries out the reaction ATP-independent breakage of single-stranded DNA, followed by passage and rejoining.. Releases the supercoiling and torsional tension of DNA, which is introduced during the DNA replication and transcription, by transiently cleaving and rejoining one strand of the DNA duplex. Introduces a single-strand break via transesterification at a target site in duplex DNA. The scissile phosphodiester is attacked by the catalytic tyrosine of the enzyme, resulting in the formation of a DNA-(5'-phosphotyrosyl)-enzyme intermediate and the expulsion of a 3'-OH DNA strand. The free DNA strand then undergoes passage around the unbroken strand, thus removing DNA supercoils. Finally, in the religation step, the DNA 3'-OH attacks the covalent intermediate to expel the active-site tyrosine and restore the DNA phosphodiester backbone. The protein is DNA topoisomerase 1 of Helicobacter pylori (strain ATCC 700392 / 26695) (Campylobacter pylori).